Consider the following 434-residue polypeptide: 3-phosphoshikimate 1-carboxyvinyltransferase (434 aa).

The 3-phosphoshikimate site is built by Lys-15, Ser-16, and Arg-20. Lys-15 is a phosphoenolpyruvate binding site. The phosphoenolpyruvate site is built by Gly-96 and Arg-124. Residues Ser-169, Gln-171, Ser-195, Asp-319, and Lys-346 each contribute to the 3-phosphoshikimate site. Gln-171 provides a ligand contact to phosphoenolpyruvate. Catalysis depends on Asp-319, which acts as the Proton acceptor. Phosphoenolpyruvate-binding residues include Arg-350 and Arg-394.

It belongs to the EPSP synthase family. In terms of assembly, monomer.

The protein resides in the cytoplasm. The catalysed reaction is 3-phosphoshikimate + phosphoenolpyruvate = 5-O-(1-carboxyvinyl)-3-phosphoshikimate + phosphate. Its pathway is metabolic intermediate biosynthesis; chorismate biosynthesis; chorismate from D-erythrose 4-phosphate and phosphoenolpyruvate: step 6/7. Catalyzes the transfer of the enolpyruvyl moiety of phosphoenolpyruvate (PEP) to the 5-hydroxyl of shikimate-3-phosphate (S3P) to produce enolpyruvyl shikimate-3-phosphate and inorganic phosphate. This Chlorobaculum tepidum (strain ATCC 49652 / DSM 12025 / NBRC 103806 / TLS) (Chlorobium tepidum) protein is 3-phosphoshikimate 1-carboxyvinyltransferase.